Reading from the N-terminus, the 201-residue chain is Superoxide dismutase [Mn] (201 aa).

Mn(2+) is bound by residues histidine 27, histidine 81, aspartate 163, and histidine 167.

It belongs to the iron/manganese superoxide dismutase family. In terms of assembly, homodimer. Requires Mn(2+) as cofactor.

The protein localises to the secreted. It catalyses the reaction 2 superoxide + 2 H(+) = H2O2 + O2. In terms of biological role, destroys superoxide anion radicals which are normally produced within the cells and which are toxic to biological systems. The polypeptide is Superoxide dismutase [Mn] (sodA) (Streptococcus pyogenes serotype M6 (strain ATCC BAA-946 / MGAS10394)).